A 996-amino-acid polypeptide reads, in one-letter code: Phototropin-1 (996 aa).

Residues 1-184 (MEPTEKPSTK…PGGRSGIPRV (184 aa)) are disordered. Phosphoserine is present on residues Ser23 and Ser58. Residues 49–59 (QNLSDPRGTSP) show a composition bias toward polar residues. The segment covering 60 to 70 (QPRPQQEPAPS) has biased composition (pro residues). The segment covering 141–153 (SGGTENDPNGKKT) has biased composition (polar residues). Residues 155–166 (SQRNSQNSCRSS) are compositionally biased toward low complexity. Positions 184-257 (VSEDLKDALS…AKIRETLAAG (74 aa)) constitute a PAS 1 domain. At Ser185 the chain carries Phosphoserine. Residue Asn233 coordinates FMN. Cys234 carries the post-translational modification S-4a-FMN cysteine. Residues Arg235, Gln238, Arg251, Asn266, Asn276, Gln297, and Lys302 each contribute to the FMN site. The 55-residue stretch at 258 to 312 (NNYCGRILNYKKDGTSFWNLLTIAPIKDESGKVLKFIGMQVEVSKHTEGAKEKAL) folds into the PAC 1 domain. Residues Ser350, Ser376, and Ser410 each carry the phosphoserine modification. Disordered stretches follow at residues 351–413 (ESTN…SLSF) and 434–453 (YGEE…SVDD). Positions 434 to 443 (YGEEDDEISD) are enriched in acidic residues. Residues 444 to 453 (RDERPESVDD) are compositionally biased toward basic and acidic residues. Ser450 carries the post-translational modification Phosphoserine. The PAS 2 domain maps to 462–535 (KGIDLATTLE…KKIRNAIDNQ (74 aa)). Asn511 lines the FMN pocket. An S-4a-FMN cysteine modification is found at Cys512. Positions 513, 516, 529, 544, 554, 556, and 575 each coordinate FMN. The PAC 2 domain occupies 536–590 (TEVTVQLINYTKSGKKFWNIFHLQPMRDQKGEVQYFIGVQLDGSKHVEPVRNVIE). The 290-residue stretch at 663–952 (FKPVKPLGSG…ANEVKQHSFF (290 aa)) folds into the Protein kinase domain. Residues 669–677 (LGSGDTGSV) and Lys692 each bind ATP. Residue Asp788 is the Proton acceptor of the active site. Residues 806–862 (DFDLSCLTSCKPQLLIPSIDEKKKKKQQKSQQTPIFMAEPMRASNSFVGTEEYIAPE) are activation loop.

It belongs to the protein kinase superfamily. AGC Ser/Thr protein kinase family. Homodimer; disulfide-linked. Interacts with PKS1, PKS2, RPT2, RPT3, PHOT2 and BLUS1. Subunit of a complex made of CAR6, PHOT1 and RPT3/NPH3. Associates with CBC1 and CBC2. Binds to BHP. It depends on FMN as a cofactor. Post-translationally, autophosphorylated at Ser-185, Ser-350 and Ser-410 in response to blue light irradiation. In terms of processing, 2 molecules of FMN bind covalently to cysteines after exposure to blue light and are reversed in the dark. Present in guard cells (at protein level).

The protein localises to the cell membrane. The protein resides in the cytoplasm. It carries out the reaction L-seryl-[protein] + ATP = O-phospho-L-seryl-[protein] + ADP + H(+). The catalysed reaction is L-threonyl-[protein] + ATP = O-phospho-L-threonyl-[protein] + ADP + H(+). With respect to regulation, autophosphorylation is inhibited by staurosporine, but not by tyrphostin 9, sphingosine, GW5074 and BML-265. In terms of biological role, protein kinase that acts as a blue light (BL) photoreceptor in a signal-transduction pathway for photo-induced movements. Triggers the phosphorylation of AHA1 and AHA2 C-terminal penultimate Thr in guard cells to activate them and induce stomatal opening in response to blue light (BL). Also phosphorylates BLUS1, a kinase involved in stomatal opening. Mediates the phosphorylation of CBC1 in stomata, but not of CBC2, in response to blue light. Required for blue light mediated mRNA destabilization. Mediates calcium spiking of extracellular origin in response to a low rate of blue light. Also mediates rapid membrane depolarization and growth inhibition in response to blue light. Necessary for root phototropism. Involved in hypocotyl phototropism under a low rate but not under a high rate of blue light. Contributes to the chloroplast accumulation but seems not to be required for chloroplast translocation. Regulates stomata opening and photomorphogenesis response of leaf tissue. Confers sensitivity to drought. Not involved in hypocotyl elongation inhibition, anthocyanin accumulation or cotyledon opening. Involved in the regulation of leaf position and morphology via the phosphorylation of ABCB19 during blue light responses to modulate auxin distribution. This chain is Phototropin-1, found in Arabidopsis thaliana (Mouse-ear cress).